The chain runs to 122 residues: Small ribosomal subunit protein uS13 (122 aa).

Positions 95-122 are disordered; it reads GLPVRGQRTHTNARTRKGPAKPIAGKKK.

This sequence belongs to the universal ribosomal protein uS13 family. In terms of assembly, part of the 30S ribosomal subunit. Forms a loose heterodimer with protein S19. Forms two bridges to the 50S subunit in the 70S ribosome.

In terms of biological role, located at the top of the head of the 30S subunit, it contacts several helices of the 16S rRNA. In the 70S ribosome it contacts the 23S rRNA (bridge B1a) and protein L5 of the 50S subunit (bridge B1b), connecting the 2 subunits; these bridges are implicated in subunit movement. Contacts the tRNAs in the A and P-sites. This chain is Small ribosomal subunit protein uS13, found in Xanthobacter autotrophicus (strain ATCC BAA-1158 / Py2).